Reading from the N-terminus, the 335-residue chain is Glucan endo-1,3-beta-glucosidase, acidic isoform (335 aa).

The first 29 residues, 1–29 (MARQGVIASMHALALLLGAFAAIPTGVQS), serve as a signal peptide directing secretion. E122 (proton donor) is an active-site residue. E259 functions as the Nucleophile in the catalytic mechanism.

This sequence belongs to the glycosyl hydrolase 17 family. Accumulates in aleurone layers. Much lower levels are found in the embryo, and none in starchy endosperm.

It is found in the secreted. The protein resides in the extracellular space. It carries out the reaction Hydrolysis of (1-&gt;3)-beta-D-glucosidic linkages in (1-&gt;3)-beta-D-glucans.. Its function is as follows. Is thought to be an important plant defense-related product against fungal pathogens. The protein is Glucan endo-1,3-beta-glucosidase, acidic isoform of Zea mays (Maize).